The primary structure comprises 363 residues: tRNA N6-adenosine threonylcarbamoyltransferase (363 aa).

Histidine 121 and histidine 125 together coordinate Fe cation. Residues 143 to 147 (LASGG), aspartate 176, glycine 189, and asparagine 287 each bind substrate. Fe cation is bound at residue aspartate 315.

It belongs to the KAE1 / TsaD family. The cofactor is Fe(2+).

The protein resides in the cytoplasm. The enzyme catalyses L-threonylcarbamoyladenylate + adenosine(37) in tRNA = N(6)-L-threonylcarbamoyladenosine(37) in tRNA + AMP + H(+). In terms of biological role, required for the formation of a threonylcarbamoyl group on adenosine at position 37 (t(6)A37) in tRNAs that read codons beginning with adenine. Is involved in the transfer of the threonylcarbamoyl moiety of threonylcarbamoyl-AMP (TC-AMP) to the N6 group of A37, together with TsaE and TsaB. TsaD likely plays a direct catalytic role in this reaction. This chain is tRNA N6-adenosine threonylcarbamoyltransferase, found in Rhodopseudomonas palustris (strain HaA2).